Here is a 156-residue protein sequence, read N- to C-terminus: Cell division protein SepF (156 aa).

Basic and acidic residues predominate over residues S23–D36. The segment at S23 to A48 is disordered. The span at P37 to A48 shows a compositional bias: polar residues.

Belongs to the SepF family. Homodimer. Interacts with FtsZ.

Its subcellular location is the cytoplasm. In terms of biological role, cell division protein that is part of the divisome complex and is recruited early to the Z-ring. Probably stimulates Z-ring formation, perhaps through the cross-linking of FtsZ protofilaments. Its function overlaps with FtsA. This Bacillus cereus (strain ATCC 10987 / NRS 248) protein is Cell division protein SepF.